Here is a 191-residue protein sequence, read N- to C-terminus: Glycerol-3-phosphate acyltransferase (191 aa).

5 helical membrane passes run 5-25, 50-70, 78-98, 112-132, and 153-173; these read IVFVLSYILGSIPFSLVITKI, CIAALALLLDSLKGFIAVYIA, SFHMYASAILVVLGHMFPVWL, ILIALNISLVLAFVFVWLAVF, and SFFFQRDLFFTLLTVAILIFF.

It belongs to the PlsY family. In terms of assembly, probably interacts with PlsX.

It is found in the cell membrane. The catalysed reaction is an acyl phosphate + sn-glycerol 3-phosphate = a 1-acyl-sn-glycero-3-phosphate + phosphate. Its pathway is lipid metabolism; phospholipid metabolism. Functionally, catalyzes the transfer of an acyl group from acyl-phosphate (acyl-PO(4)) to glycerol-3-phosphate (G3P) to form lysophosphatidic acid (LPA). This enzyme utilizes acyl-phosphate as fatty acyl donor, but not acyl-CoA or acyl-ACP. The sequence is that of Glycerol-3-phosphate acyltransferase from Wolbachia sp. subsp. Brugia malayi (strain TRS).